We begin with the raw amino-acid sequence, 467 residues long: Thiohydroximate-O-sulfate sulfur/sulfate-lyase (nitrile-forming) NSP3 (467 aa).

A Jacalin-type lectin domain is found at 2 to 143 (AQKLVAQGGE…LHSLGAYVSL (142 aa)). Kelch repeat units lie at residues 177-225 (KIYS…VRMV), 230-276 (TLYT…SMAA), 280-329 (NVYV…VVQG), 331-375 (VWIV…ASAA), and 379-434 (HIVI…ASTT). Catalysis depends on arginine 237, which acts as the Proton donor. Arginine 237, serine 270, arginine 292, glycine 321, and valine 370 together coordinate a (Z)-N-(sulfonatooxy)alkanimidothioate. Arginine 292 serves as the catalytic Proton donor. Fe(2+) is bound by residues glutamate 386, aspartate 390, and histidine 394. Tryptophan 429 is an a (Z)-N-(sulfonatooxy)alkanimidothioate binding site.

The protein belongs to the jacalin lectin family. Fe(2+) is required as a cofactor. As to expression, mainly expressed in roots, and, at low levels, in seedlings and leaves. Observed in seeds.

It catalyses the reaction a (Z)-N-(sulfonatooxy)alkanimidothioate = a nitrile + sulfur + sulfate. It carries out the reaction (Z)-phenyl-N-(sulfonatooxy)methanimidothioate = phenylacetonitrile + sulfur + sulfate. The enzyme catalyses (Z)-N-(sulfonatooxy)prop-2-enimidothioate = but-3-enenitrile + sulfur + sulfate. Functionally, specifier protein responsible for constitutive and herbivore-induced simple nitrile formation, especially in roots. Promotes simple nitriles, but not epithionitrile or thiocyanate formation. Converts allylglucosinolate and benzylglucosinolate (glucotropaeolin) to their corresponding simple nitriles in the presence of myrosinase. This Arabidopsis thaliana (Mouse-ear cress) protein is Thiohydroximate-O-sulfate sulfur/sulfate-lyase (nitrile-forming) NSP3.